Consider the following 428-residue polypeptide: MTASASRPLLGCIADDFTGATDLANMLVKSGMRTVQTIGVPAESASIDADAIVVALKSRTIPAADAVAQSLAAYEWLRAQGCRQFFFKYCSTFDSTDAGNIGPVADALLDAAGGGFTIACPAFPENGRTIYRGHLFVGDVLLNESGMENHPLTPMKDANLVRVLQRQTSSKVGLIRYDTIARGAADVRACIAQLRADGVRIAIADALSDRDLYVLGEACAALPLVTGGSGIALGLPENFRRAAELAARDNAASLPRIDGTATVLAGSASKATNAQVAAWRATRPSFRIDPLAAARGEPVVDQALAFARSHLPEPVLIYATATPDEVKAVQQALGVEAAGELVERTLAAIAHGLRALGVRKFVVAGGETSGAVVQALGVKSLQIGAQIDPGVPATATIDTEPLGLALKSGNFGAVDFFDKALRALDGAA.

ATP is bound by residues S267, 365–368, and G409; that span reads GGET.

This sequence belongs to the four-carbon acid sugar kinase family.

The enzyme catalyses 3-dehydro-L-erythronate + ATP = 3-dehydro-4-O-phospho-L-erythronate + ADP + H(+). It catalyses the reaction 3-dehydro-D-erythronate + ATP = 3-dehydro-4-O-phospho-D-erythronate + ADP + H(+). Functionally, catalyzes the ATP-dependent phosphorylation of 3-oxo-tetronate to 3-oxo-tetronate 4-phosphate. The polypeptide is 3-oxo-tetronate kinase (Burkholderia multivorans (strain ATCC 17616 / 249)).